The primary structure comprises 317 residues: Universal stress protein Mb2019 (317 aa).

Residues Gly13, 128–134, 142–143, Gly175, Asp208, 277–283, and 291–293 contribute to the ATP site; these read GYRGQGA, SV, GSHGRGG, and SVS.

It belongs to the universal stress protein A family.

This is Universal stress protein Mb2019 from Mycobacterium bovis (strain ATCC BAA-935 / AF2122/97).